Reading from the N-terminus, the 128-residue chain is Fluoride-specific ion channel FluC (128 aa).

Transmembrane regions (helical) follow at residues 7–27 (AVLLVGAGGFAGASARYLIAV), 34–54 (TGFPMATMLVNVLGCFLIGMI), 70–90 (LLLATGFCGGFTTFSSYMYEI), and 104–124 (LYLIGSLVGGMVFLYLGMALA). Residues Gly-78 and Thr-81 each contribute to the Na(+) site.

It belongs to the fluoride channel Fluc/FEX (TC 1.A.43) family.

It is found in the cell inner membrane. The enzyme catalyses fluoride(in) = fluoride(out). Na(+) is not transported, but it plays an essential structural role and its presence is essential for fluoride channel function. Its function is as follows. Fluoride-specific ion channel. Important for reducing fluoride concentration in the cell, thus reducing its toxicity. The chain is Fluoride-specific ion channel FluC from Prosthecochloris aestuarii (strain DSM 271 / SK 413).